Consider the following 191-residue polypeptide: Protein YceI (191 aa).

The N-terminal stretch at methionine 1–alanine 22 is a signal peptide.

It belongs to the UPF0312 family. Type 1 subfamily.

It is found in the periplasm. The chain is Protein YceI from Escherichia coli O6:H1 (strain CFT073 / ATCC 700928 / UPEC).